Consider the following 292-residue polypeptide: Rab effector Noc2 (292 aa).

The region spanning 41-158 is the RabBD domain; it reads QRKSQSLSPA…KRSGAWFYKG (118 aa). Residues 89 to 146 form an FYVE-type zinc finger; sequence GNGLSQCLLCGEVLGFLGSSSVFCKDCRKKVCTKCGIEASPSQKRPLWLCKICSEQRE. Residues C95, C98, C112, C115, C120, C123, C138, and C141 each contribute to the Zn(2+) site. The interval 175 to 292 is disordered; the sequence is PSFRPLPVEP…RTLAGPRGPR (118 aa). Over residues 221 to 235 the composition is skewed to basic and acidic residues; sequence LDDRLRPAGVRDPKG. Position 248 is a phosphoserine (S248). Low complexity predominate over residues 257–269; the sequence is ASCLSGSQSSLAS.

As to quaternary structure, recruited to dense-core vesicles through specific interaction with RAB27A in endocrine cells. Interacts with RAB3A, RAB3B, RAB3C and RAB3D. Interacts with ZYX.

The protein resides in the cytoplasm. It is found in the cytoplasmic vesicle. It localises to the secretory vesicle membrane. Functionally, rab GTPase effector involved in the late steps of regulated exocytosis, both in endocrine and exocrine cells. The protein is Rab effector Noc2 (RPH3AL) of Bos taurus (Bovine).